Reading from the N-terminus, the 382-residue chain is Lipid-A-disaccharide synthase (382 aa).

The protein belongs to the LpxB family.

It carries out the reaction 2-N,3-O-bis[(3R)-3-hydroxytetradecanoyl]-alpha-D-glucosaminyl 1-phosphate + UDP-2-N,3-O-bis[(3R)-3-hydroxytetradecanoyl]-alpha-D-glucosamine = lipid A disaccharide (E. coli) + UDP + H(+). It catalyses the reaction a lipid X + a UDP-2-N,3-O-bis[(3R)-3-hydroxyacyl]-alpha-D-glucosamine = a lipid A disaccharide + UDP + H(+). The protein operates within glycolipid biosynthesis; lipid IV(A) biosynthesis; lipid IV(A) from (3R)-3-hydroxytetradecanoyl-[acyl-carrier-protein] and UDP-N-acetyl-alpha-D-glucosamine: step 5/6. In terms of biological role, condensation of UDP-2,3-diacylglucosamine and 2,3-diacylglucosamine-1-phosphate to form lipid A disaccharide, a precursor of lipid A, a phosphorylated glycolipid that anchors the lipopolysaccharide to the outer membrane of the cell. In Shigella flexneri serotype 5b (strain 8401), this protein is Lipid-A-disaccharide synthase.